The primary structure comprises 175 residues: Adenine phosphoribosyltransferase (175 aa).

This sequence belongs to the purine/pyrimidine phosphoribosyltransferase family. Homodimer.

It localises to the cytoplasm. It catalyses the reaction AMP + diphosphate = 5-phospho-alpha-D-ribose 1-diphosphate + adenine. It functions in the pathway purine metabolism; AMP biosynthesis via salvage pathway; AMP from adenine: step 1/1. Its function is as follows. Catalyzes a salvage reaction resulting in the formation of AMP, that is energically less costly than de novo synthesis. This chain is Adenine phosphoribosyltransferase, found in Maricaulis maris (strain MCS10) (Caulobacter maris).